The primary structure comprises 129 residues: Large ribosomal subunit protein bL12 (129 aa).

It belongs to the bacterial ribosomal protein bL12 family. As to quaternary structure, homodimer. Part of the ribosomal stalk of the 50S ribosomal subunit. Forms a multimeric L10(L12)X complex, where L10 forms an elongated spine to which 2 to 4 L12 dimers bind in a sequential fashion. Binds GTP-bound translation factors.

Functionally, forms part of the ribosomal stalk which helps the ribosome interact with GTP-bound translation factors. Is thus essential for accurate translation. This is Large ribosomal subunit protein bL12 from Thermosipho melanesiensis (strain DSM 12029 / CIP 104789 / BI429).